The chain runs to 79 residues: Translational regulator CsrA (79 aa).

It belongs to the CsrA/RsmA family. Homodimer; the beta-strands of each monomer intercalate to form a hydrophobic core, while the alpha-helices form wings that extend away from the core.

It localises to the cytoplasm. A translational regulator that binds mRNA to regulate translation initiation and/or mRNA stability. Usually binds in the 5'-UTR at or near the Shine-Dalgarno sequence preventing ribosome-binding, thus repressing translation. Its main target seems to be the major flagellin gene, while its function is anatagonized by FliW. The protein is Translational regulator CsrA of Helicobacter hepaticus (strain ATCC 51449 / 3B1).